A 222-amino-acid chain; its full sequence is ATP-dependent dethiobiotin synthetase BioD 2 (222 aa).

Threonine 17 serves as a coordination point for Mg(2+). Lysine 38 is a catalytic residue. Position 42 (threonine 42) interacts with substrate. Residues aspartate 55 and glutamate 112 each contribute to the Mg(2+) site. ATP is bound by residues aspartate 55, 112–115, 172–173, 201–203, and glutamate 208; these read EGCG, NR, and PYL.

Belongs to the dethiobiotin synthetase family. In terms of assembly, homodimer. Mg(2+) is required as a cofactor.

It is found in the cytoplasm. The catalysed reaction is (7R,8S)-7,8-diammoniononanoate + CO2 + ATP = (4R,5S)-dethiobiotin + ADP + phosphate + 3 H(+). It participates in cofactor biosynthesis; biotin biosynthesis; biotin from 7,8-diaminononanoate: step 1/2. Its function is as follows. Catalyzes a mechanistically unusual reaction, the ATP-dependent insertion of CO2 between the N7 and N8 nitrogen atoms of 7,8-diaminopelargonic acid (DAPA, also called 7,8-diammoniononanoate) to form a ureido ring. This chain is ATP-dependent dethiobiotin synthetase BioD 2, found in Yersinia pestis.